The primary structure comprises 800 residues: uncharacterized protein (800 aa).

The N-terminal stretch at Met1–Ala21 is a signal peptide. A compositionally biased stretch (polar residues) spans Ser63–Ile72. 3 disordered regions span residues Ser63–Thr470, Thr602–Ser670, and Ser710–Ser776. 4 stretches are compositionally biased toward low complexity: residues Thr73 to Ser314, Ser321 to Ser368, Ser375 to Pro444, and Thr451 to Thr470. Residues Ser710–Thr720 show a composition bias toward low complexity. A compositionally biased stretch (polar residues) spans Glu721 to Lys734. Low complexity predominate over residues Thr735–Ser776.

It localises to the secreted. The protein localises to the cell surface. This is an uncharacterized protein from Schizosaccharomyces pombe (strain 972 / ATCC 24843) (Fission yeast).